Reading from the N-terminus, the 591-residue chain is Thiamine transporter thi9 (591 aa).

A compositionally biased stretch (polar residues) spans 1-22 (MPSSQISHQDPELGQTSSGSSS). A disordered region spans residues 1–42 (MPSSQISHQDPELGQTSSGSSSIKEKAEPQLYAGPIDPARRP). 5 helical membrane passes run 98–118 (LTFS…AMLV), 342–362 (IFYS…LYLF), 397–417 (VVMN…SVLA), 450–470 (ITVI…SAVA), and 545–565 (YAVV…IVIP). At Ser585 the chain carries Phosphoserine.

This sequence belongs to the amino acid-polyamine-organocation (APC) superfamily.

It localises to the endoplasmic reticulum membrane. The protein resides in the cell membrane. Its function is as follows. Thiamine transporter involved in the cellular uptake of thiamine. Pyrithiamine, oxythiamine, amprolium, and the thiazole part of thiamine have been shown to be also substrates of thi9. This chain is Thiamine transporter thi9 (thi9), found in Schizosaccharomyces pombe (strain 972 / ATCC 24843) (Fission yeast).